The chain runs to 597 residues: Elongation factor 4 (597 aa).

The region spanning 2–184 is the tr-type G domain; the sequence is KNIRNFSIIA…EIVAKIPAPT (183 aa). Residues 14-19 and 131-134 each bind GTP; these read DHGKST and NKID.

It belongs to the TRAFAC class translation factor GTPase superfamily. Classic translation factor GTPase family. LepA subfamily.

The protein resides in the cell inner membrane. The catalysed reaction is GTP + H2O = GDP + phosphate + H(+). Its function is as follows. Required for accurate and efficient protein synthesis under certain stress conditions. May act as a fidelity factor of the translation reaction, by catalyzing a one-codon backward translocation of tRNAs on improperly translocated ribosomes. Back-translocation proceeds from a post-translocation (POST) complex to a pre-translocation (PRE) complex, thus giving elongation factor G a second chance to translocate the tRNAs correctly. Binds to ribosomes in a GTP-dependent manner. In Neisseria meningitidis serogroup B (strain ATCC BAA-335 / MC58), this protein is Elongation factor 4.